Reading from the N-terminus, the 811-residue chain is Exocyst complex component 6B (811 aa).

The stretch at methionine 50–glutamine 119 forms a coiled coil. A disordered region spans residues serine 260–aspartate 280.

Belongs to the SEC15 family. As to quaternary structure, the exocyst complex is composed of SEC3, SEC5, SEC6, SEC8, SEC10, SEC15, EXO70 and EXO84.

Functionally, component of the exocyst complex involved in the docking of exocytic vesicles with fusion sites on the plasma membrane. This chain is Exocyst complex component 6B (EXOC6B), found in Homo sapiens (Human).